A 390-amino-acid chain; its full sequence is Chitinase-3-like protein 2 (390 aa).

A signal peptide spans 1 to 26 (MGATTMDQKSLWAGVVVLLLLQGGSA). A GH18 domain is found at 27-390 (YKLVCYFTNW…QAVKRSLGSL (364 aa)). A disulfide bond links Cys-31 and Cys-56. N-linked (GlcNAc...) asparagine glycosylation is present at Asn-35. Chitin-binding positions include 75 to 76 (DK), 102 to 105 (GGYL), Tyr-104, Tyr-146, 210 to 213 (LSFD), Asp-213, and Trp-360.

The protein belongs to the glycosyl hydrolase 18 family. In terms of tissue distribution, highest expression in chondrocytes, followed by synoviocytes, lung and heart. Not detected in spleen, pancreas, and liver. May also be expressed in developing brain and placenta.

It localises to the secreted. Lectin that binds chitooligosaccharides and other glycans with high affinity, but not heparin. Has no chitinase activity. The chain is Chitinase-3-like protein 2 (CHI3L2) from Homo sapiens (Human).